We begin with the raw amino-acid sequence, 83 residues long: Putative cytochrome b5 B11H24.095 (83 aa).

One can recognise a Cytochrome b5 heme-binding domain in the interval 2–78 (SQTFTKSQVA…GTKLKVGTLA (77 aa)). The heme site is built by His-37 and His-60.

It belongs to the cytochrome b5 family.

The chain is Putative cytochrome b5 B11H24.095 from Neurospora crassa (strain ATCC 24698 / 74-OR23-1A / CBS 708.71 / DSM 1257 / FGSC 987).